Here is a 453-residue protein sequence, read N- to C-terminus: Bifunctional protein GlmU (453 aa).

A pyrophosphorylase region spans residues 1 to 225 (MNIVILAAGT…EWETLGVNSK (225 aa)). UDP-N-acetyl-alpha-D-glucosamine is bound by residues 6-9 (LAAG), Lys20, Gln71, 76-77 (GT), 98-100 (YGD), Gly135, Glu150, Asn165, and Asn223. Asp100 serves as a coordination point for Mg(2+). Asn223 is a Mg(2+) binding site. Positions 226 to 246 (AQLAELERIHQRTIADALLVD) are linker. The segment at 247 to 453 (GVTLADPARV…GYVRPVKKKS (207 aa)) is N-acetyltransferase. Residues Arg329 and Lys347 each contribute to the UDP-N-acetyl-alpha-D-glucosamine site. His359 serves as the catalytic Proton acceptor. Positions 362 and 373 each coordinate UDP-N-acetyl-alpha-D-glucosamine. Residues Ala376, 382–383 (NY), Ser401, and Ala419 contribute to the acetyl-CoA site.

The protein in the N-terminal section; belongs to the N-acetylglucosamine-1-phosphate uridyltransferase family. This sequence in the C-terminal section; belongs to the transferase hexapeptide repeat family. As to quaternary structure, homotrimer. Requires Mg(2+) as cofactor.

The protein resides in the cytoplasm. The catalysed reaction is alpha-D-glucosamine 1-phosphate + acetyl-CoA = N-acetyl-alpha-D-glucosamine 1-phosphate + CoA + H(+). The enzyme catalyses N-acetyl-alpha-D-glucosamine 1-phosphate + UTP + H(+) = UDP-N-acetyl-alpha-D-glucosamine + diphosphate. The protein operates within nucleotide-sugar biosynthesis; UDP-N-acetyl-alpha-D-glucosamine biosynthesis; N-acetyl-alpha-D-glucosamine 1-phosphate from alpha-D-glucosamine 6-phosphate (route II): step 2/2. It functions in the pathway nucleotide-sugar biosynthesis; UDP-N-acetyl-alpha-D-glucosamine biosynthesis; UDP-N-acetyl-alpha-D-glucosamine from N-acetyl-alpha-D-glucosamine 1-phosphate: step 1/1. Its pathway is bacterial outer membrane biogenesis; LPS lipid A biosynthesis. Catalyzes the last two sequential reactions in the de novo biosynthetic pathway for UDP-N-acetylglucosamine (UDP-GlcNAc). The C-terminal domain catalyzes the transfer of acetyl group from acetyl coenzyme A to glucosamine-1-phosphate (GlcN-1-P) to produce N-acetylglucosamine-1-phosphate (GlcNAc-1-P), which is converted into UDP-GlcNAc by the transfer of uridine 5-monophosphate (from uridine 5-triphosphate), a reaction catalyzed by the N-terminal domain. In Burkholderia ambifaria (strain MC40-6), this protein is Bifunctional protein GlmU.